The following is a 359-amino-acid chain: tRNA-specific 2-thiouridylase MnmA (359 aa).

Residues 10 to 17 and Leu36 contribute to the ATP site; that span reads GISGGVDS. Catalysis depends on Cys101, which acts as the Nucleophile. A disulfide bridge connects residues Cys101 and Cys197. ATP is bound at residue Gly125. The tract at residues 147–149 is interaction with tRNA; sequence KDQ. The active-site Cysteine persulfide intermediate is Cys197. The tract at residues 306-307 is interaction with tRNA; that stretch reads RY.

Belongs to the MnmA/TRMU family.

Its subcellular location is the cytoplasm. The enzyme catalyses S-sulfanyl-L-cysteinyl-[protein] + uridine(34) in tRNA + AH2 + ATP = 2-thiouridine(34) in tRNA + L-cysteinyl-[protein] + A + AMP + diphosphate + H(+). In terms of biological role, catalyzes the 2-thiolation of uridine at the wobble position (U34) of tRNA, leading to the formation of s(2)U34. The protein is tRNA-specific 2-thiouridylase MnmA of Chlorobium chlorochromatii (strain CaD3).